The chain runs to 250 residues: 23S rRNA (guanosine-2'-O-)-methyltransferase RlmB (250 aa).

S-adenosyl-L-methionine-binding residues include G197, I217, and M226.

This sequence belongs to the class IV-like SAM-binding methyltransferase superfamily. RNA methyltransferase TrmH family. RlmB subfamily.

It is found in the cytoplasm. It catalyses the reaction guanosine(2251) in 23S rRNA + S-adenosyl-L-methionine = 2'-O-methylguanosine(2251) in 23S rRNA + S-adenosyl-L-homocysteine + H(+). Functionally, specifically methylates the ribose of guanosine 2251 in 23S rRNA. The polypeptide is 23S rRNA (guanosine-2'-O-)-methyltransferase RlmB (Neisseria meningitidis serogroup B (strain ATCC BAA-335 / MC58)).